A 57-amino-acid polypeptide reads, in one-letter code: Large ribosomal subunit protein bL32 (57 aa).

The segment at 1-20 is disordered; that stretch reads MAVQQRRVSKSRKGMRRSHD. A compositionally biased stretch (basic residues) spans 7–19; it reads RVSKSRKGMRRSH.

It belongs to the bacterial ribosomal protein bL32 family.

In Ureaplasma urealyticum serovar 10 (strain ATCC 33699 / Western), this protein is Large ribosomal subunit protein bL32.